The sequence spans 280 residues: Golgi phosphoprotein 3-like B (280 aa).

Residues 1 to 32 (MTTLIRRGRRAEEGQERRADSEDSIKDKDEED) form a disordered region. A compositionally biased stretch (basic and acidic residues) spans 10–32 (RAEEGQERRADSEDSIKDKDEED). A 1,2-diacyl-sn-glycero-3-phospho-(1D-myo-inositol 4-phosphate) contacts are provided by Trp-62, Arg-71, Arg-152, and Arg-155. The segment at 171-182 (EKQNFLLFDMTT) is beta-hairpin required for oligomerization.

The protein belongs to the GOLPH3/VPS74 family. As to quaternary structure, homooligomer.

The protein localises to the golgi apparatus. The protein resides in the golgi stack membrane. Its subcellular location is the trans-Golgi network membrane. In terms of biological role, phosphatidylinositol-4-phosphate-binding protein that may play a role in the process of vesicle budding at the Golgi and anterograde transport to the plasma membrane. The protein is Golgi phosphoprotein 3-like B (golph3l-b) of Xenopus laevis (African clawed frog).